The chain runs to 196 residues: GTP cyclohydrolase-2 (196 aa).

Position 49 to 53 (49 to 53 (RVHSE)) interacts with GTP. Positions 54, 65, and 67 each coordinate Zn(2+). Residues Q70, 92–94 (EGR), and T114 each bind GTP. D126 functions as the Proton acceptor in the catalytic mechanism. Catalysis depends on R128, which acts as the Nucleophile. Positions 149 and 154 each coordinate GTP.

It belongs to the GTP cyclohydrolase II family. Homodimer. Requires Zn(2+) as cofactor.

The catalysed reaction is GTP + 4 H2O = 2,5-diamino-6-hydroxy-4-(5-phosphoribosylamino)-pyrimidine + formate + 2 phosphate + 3 H(+). Its pathway is cofactor biosynthesis; riboflavin biosynthesis; 5-amino-6-(D-ribitylamino)uracil from GTP: step 1/4. In terms of biological role, catalyzes the conversion of GTP to 2,5-diamino-6-ribosylamino-4(3H)-pyrimidinone 5'-phosphate (DARP), formate and pyrophosphate. This is GTP cyclohydrolase-2 from Escherichia coli O127:H6 (strain E2348/69 / EPEC).